Here is a 358-residue protein sequence, read N- to C-terminus: 3-isopropylmalate dehydrogenase (358 aa).

76–89 is a binding site for NAD(+); it reads GPRWDNLTGAERPE. 4 residues coordinate substrate: R96, R106, R135, and D225. Mg(2+) is bound by residues D225, D249, and D253. 283–295 serves as a coordination point for NAD(+); the sequence is GSAPDIAGQNKAN.

The protein belongs to the isocitrate and isopropylmalate dehydrogenases family. LeuB type 1 subfamily. Homodimer. It depends on Mg(2+) as a cofactor. The cofactor is Mn(2+).

It is found in the cytoplasm. The catalysed reaction is (2R,3S)-3-isopropylmalate + NAD(+) = 4-methyl-2-oxopentanoate + CO2 + NADH. It participates in amino-acid biosynthesis; L-leucine biosynthesis; L-leucine from 3-methyl-2-oxobutanoate: step 3/4. Functionally, catalyzes the oxidation of 3-carboxy-2-hydroxy-4-methylpentanoate (3-isopropylmalate) to 3-carboxy-4-methyl-2-oxopentanoate. The product decarboxylates to 4-methyl-2 oxopentanoate. The polypeptide is 3-isopropylmalate dehydrogenase (Oleidesulfovibrio alaskensis (strain ATCC BAA-1058 / DSM 17464 / G20) (Desulfovibrio alaskensis)).